Consider the following 229-residue polypeptide: Heptaprenylglyceryl phosphate synthase (229 aa).

Residue lysine 12 coordinates sn-glycerol 1-phosphate. Mg(2+)-binding residues include aspartate 14 and serine 40. Sn-glycerol 1-phosphate is bound by residues 159–164, glycine 189, and 209–210; these read YLEYSG and GN.

It belongs to the GGGP/HepGP synthase family. Group I subfamily. As to quaternary structure, homodimer. Mg(2+) serves as cofactor.

It catalyses the reaction sn-glycerol 1-phosphate + all-trans-heptaprenyl diphosphate = 3-heptaprenyl-sn-glycero-1-phosphate + diphosphate. Its pathway is membrane lipid metabolism; glycerophospholipid metabolism. Its function is as follows. Prenyltransferase that catalyzes in vivo the transfer of the heptaprenyl moiety of heptaprenyl pyrophosphate (HepPP; 35 carbon atoms) to the C3 hydroxyl of sn-glycerol-1-phosphate (G1P), producing heptaprenylglyceryl phosphate (HepGP). This reaction is an ether-bond-formation step in the biosynthesis of archaea-type G1P-based membrane lipids found in Bacillales. The chain is Heptaprenylglyceryl phosphate synthase from Bacillus cereus (strain B4264).